Reading from the N-terminus, the 753-residue chain is MGTNGGVIAEQSMEIETNENPDKVEEPVVRRKRVTRRRHRRIHSKNNCLTPPNSDDDPQMSTPDDPVIHSPPSIGAAPGMNGYHGSGVKLEESSGACGSPDDGLLDSSEESRRRQKTCRVCGDHATGYNFNVITCESCKAFFRRNALRPKEFKCPYSEDCEINSVSRRFCQKCRLRKCFTVGMKKEWILNEEQLRRRKNSRLNNTGTCNKRSQPGNQQSPQGPNQQPHLSPHHPGVAIYPPQPQRPLTINPMDNQMMHHMQANRPNAMPQLISPPGAQPYPLTSPVGSSASDSPPNRSLTMMHNGEKSPDGYDPNIMAHRAPPPSFNNRPKMDSGQVVLSTEEYKQLLSRIPGAQVPGLMNEEEPINKRAAYNCNGHPMPAETTPPYSAPMSDMSLSRHNSTSSGTEKNHMTHSTVSAIPGNSAQNHFDIASFGMGIVTATGGGDAAEEMYKRMNMFYENCIQSALDSPENQEPKPQEAMIPKEEYMTPTHGFQYQSDPYQVPPAERNINYQLNAAELKALDAVREAFYGMDDPMEQGRQMQSFLKANKTPADIMNIMDVTMRRFVKVAKGVPAFREVSQEGKFSLLKGGMIEMLTVRGVTRYDASTNSFKTPTIKGQNVSVNVDDMFAKLNANAQAQKAKCLEFFGFFDEEIKKNELAVYLVMLAVLFSVRSDPPMNENDVRIVTERHNHFMSLLNRYLESLFGEQARRIFERIPKALGLLNEIARNAGMLFMGTVRSGEAEELPGEFFKIK.

The disordered stretch occupies residues 1 to 109 (MGTNGGVIAE…PDDGLLDSSE (109 aa)). Basic and acidic residues predominate over residues 20–29 (NPDKVEEPVV). Basic residues predominate over residues 30 to 44 (RRKRVTRRRHRRIHS). A DNA-binding region (nuclear receptor) is located at residues 115 to 190 (QKTCRVCGDH…VGMKKEWILN (76 aa)). 2 NR C4-type zinc fingers span residues 118-138 (CRVC…CESC) and 154-173 (CPYS…CQKC). Positions 191–206 (EEQLRRRKNSRLNNTG) match the Nuclear localization signal motif. Disordered stretches follow at residues 198–251 (KNSR…TINP), 266–314 (NAMP…GYDP), and 376–410 (GHPM…EKNH). Polar residues predominate over residues 201-211 (RLNNTGTCNKR). Positions 212–227 (SQPGNQQSPQGPNQQP) are enriched in low complexity. Polar residues-rich tracts occupy residues 285-301 (PVGS…SLTM) and 394-410 (MSLS…EKNH). An NR LBD domain is found at 516–753 (AELKALDAVR…ELPGEFFKIK (238 aa)).

Belongs to the nuclear hormone receptor family. In terms of assembly, interacts with din-1 isoform d. As to expression, expressed throughout muscles of the pharynx. Expressed in epidermal seam cells, the vulva, head neurons, mature spermatheca, uterus and intestine.

The protein localises to the nucleus. In terms of biological role, nuclear receptor which binds directly to response elements in target gene promoters. Activity is modulated by binding of steroid hormone ligands that include dafachronic acids. Regulates expression of genes involved in postembryonic development and the dauer diapause, in response to environmental cues. Inhibits the expression of let-7 family members when bound to corepressor din-1s which is an isoform of din-1. Plays a role in controlling the timing of seam cell development during the larval stages. Has a role in the immune response to bacterial infection, via regulation of let-7 miRNAs. Controls expression of genes that promote the aerobic catabolism of fatty acids for reproductive growth. May be involved in thermotolerance. The polypeptide is Nuclear hormone receptor family member daf-12 (Caenorhabditis elegans).